The primary structure comprises 544 residues: MAGKEIIFREDARRSLEKGVNALAEAVKITLGPKGRNVVLEKKFGSPMIVNDGVTIAREIELSDPFENMGAQLVKEVATKTNDVAGDGTTTACVLAQAIVREGLKNVAAGANPMIIKRGIEKAVDKAVEAIKNSAKTIESKSAIAQVATISANDEMIGNLIADAMEKVGKDGVITVEESKGTTTNLEIVEGMNFDRGYISPYMITDADKMEATLNDPYILITDKKISAVGDLLPLLEKVVQSGKPLLVIAEDVEGEALATLVLNKLRGTFQCVAVKAPGFGDRRKAMLQDIAILTGGTVITEEVGLKLDKATIDQLGRANKVRVKKEETIIVGGAGSTDEITKRVAQIKKQIEETTSEFDKEKLQERLAKLAGGVAVIQVGAATETEMKDKKLRIEDALNATRAAVEEGIVPGGGVAYISALKGLDGLDAGSLDEKTGIDIVRRALEEPLRQIASNAGLEGSVIVEKVKNADPGIGFNALTGEFVNMIDAGIVDPAKVTRTALQNAASIAAMILTTETLVAEKPEKEKDTMGGMGGMGGMGGMM.

Residues 30–33 (TLGP), 87–91 (DGTTT), glycine 414, 478–480 (NAL), and aspartate 494 each bind ATP.

Belongs to the chaperonin (HSP60) family. Forms a cylinder of 14 subunits composed of two heptameric rings stacked back-to-back. Interacts with the co-chaperonin GroES.

The protein resides in the cytoplasm. The enzyme catalyses ATP + H2O + a folded polypeptide = ADP + phosphate + an unfolded polypeptide.. Functionally, together with its co-chaperonin GroES, plays an essential role in assisting protein folding. The GroEL-GroES system forms a nano-cage that allows encapsulation of the non-native substrate proteins and provides a physical environment optimized to promote and accelerate protein folding. This Pelotomaculum thermopropionicum (strain DSM 13744 / JCM 10971 / SI) protein is Chaperonin GroEL.